We begin with the raw amino-acid sequence, 85 residues long: Probable oxaloacetate decarboxylase gamma chain (85 aa).

The helical transmembrane segment at 15 to 35 (ISGMGFVLLFLIVLIYAISFI) threads the bilayer.

The protein belongs to the OadG family. In terms of assembly, heterotrimer of an alpha, a beta and a gamma subunit. It depends on Na(+) as a cofactor.

It is found in the cell membrane. It catalyses the reaction oxaloacetate + 2 Na(+)(in) + H(+) = pyruvate + 2 Na(+)(out) + CO2. In terms of biological role, catalyzes the decarboxylation of oxaloacetate coupled to Na(+) translocation. The protein is Probable oxaloacetate decarboxylase gamma chain of Actinobacillus pleuropneumoniae serotype 5b (strain L20).